Consider the following 384-residue polypeptide: Multidrug/solvent efflux pump periplasmic linker protein MepA (384 aa).

The first 22 residues, 1 to 22 (MQFKPAVTALVSAVALATLLSG), serve as a signal peptide directing secretion. A lipid anchor (N-palmitoyl cysteine) is attached at Cys23. Cys23 carries S-diacylglycerol cysteine lipidation. Residues 115-155 (LAERYKQLIDEQAVSKQEYDDANAKRLQAEASLKSAQIDLR) are a coiled coil. The interval 362–384 (ATNVKKPAGPDQANAAKADAKAE) is disordered. Low complexity predominate over residues 368-378 (PAGPDQANAAK).

The protein belongs to the membrane fusion protein (MFP) (TC 8.A.1) family.

The protein localises to the cell inner membrane. The periplasmic linker protein component of an organic solvent and antibiotic efflux pump; confers resistance to toluene, hexane, p-xylene, ampicillin, penicillin G, erythromycin, novobiocin and tetracycline. The sequence is that of Multidrug/solvent efflux pump periplasmic linker protein MepA (mepA) from Pseudomonas putida (Arthrobacter siderocapsulatus).